The chain runs to 75 residues: Chaplin-D (75 aa).

The N-terminal stretch at 1 to 23 (MKKSAAVVAGAIMALGMAAPAFA) is a signal peptide. A Chaplin domain is found at 34-74 (SPGVLSGNVIQVPVHVPVNVCGNSINVVGLLNPAFGNKCEN). An intrachain disulfide couples Cys-54 to Cys-72.

Belongs to the chaplin family. Short chaplin subfamily.

Its subcellular location is the cell surface. It is found in the secreted. It localises to the cell wall. The protein resides in the fimbrium. Functionally, one of 8 partially redundant surface-active proteins required for efficient formation of aerial mycelium; the short chaplins assemble into a hydrophobic, amyloidal fibrillar surface layer that envelopes and protects aerial hyphae and spores, presumably anchored to the long chaplins. Chaplins have an overlapping function with the surface-active SapB peptide; chaplins are essential on minimal medium while on rich medium both chaplins and SapB are required for efficient aerial hyphae formation. Chaplins are also involved in cell attachment to a hydrophobic surface. Forms amyloid fibrils in vitro probably composed of stacked beta-sheets, at low extracellular concentrations individually restores the ability to form aerial hyphae to a chaplin-deficient strain. A small chaplin extract (ChpD, ChpE, ChpF, ChpG and ChpH) self-assembles into 2 different amyloids; small fibrils at the air-water interface form an amphipathic membrane that resembles spore-surface structures involved in aerial hyphae formation, and hydrophilic fibrils in solution that resemble the fibers that attach cells to a hydrophobic surface. At the air-water interface the hydrophilic surface is in contact with water (probably equivalent to the peptidoglycan layer), while the hydrophobic face is exposed to the air, making the surface of the aerial hyphae hydrophobic. A minimal chaplin strain capable of forming aerial mycelium/hyphae on minimal medium contains ChpC, ChpE and ChpH. The strain also has restored rodlet formation on the hyphae surface. A second minimal chaplin strain with ChpA, ChpD and ChpE makes slightly less robust hyphae. A small chaplin extract applied to a chaplin-deficient strain restores aerial hyphae formation. The small chaplin extract forms an amyloid-like structure similar to that seen on the surface of cells without rodlets (rdlA-rdlB deletions), and is highly surface active, reducing surface tension from 72 to 26 mJ/m(2), which probably allows escape of hyphae from an aqueous environment into air. The polypeptide is Chaplin-D (Streptomyces coelicolor (strain ATCC BAA-471 / A3(2) / M145)).